A 31-amino-acid polypeptide reads, in one-letter code: Elongation factor Tu (31 aa).

This sequence belongs to the GTP-binding elongation factor family. EF-Tu/EF-1A subfamily. As to quaternary structure, monomer.

The protein localises to the cytoplasm. Its function is as follows. This protein promotes the GTP-dependent binding of aminoacyl-tRNA to the A-site of ribosomes during protein biosynthesis. This Streptomyces laurentii protein is Elongation factor Tu (tuf).